The primary structure comprises 116 residues: Large ribosomal subunit protein bL20 (116 aa).

This sequence belongs to the bacterial ribosomal protein bL20 family.

Binds directly to 23S ribosomal RNA and is necessary for the in vitro assembly process of the 50S ribosomal subunit. It is not involved in the protein synthesizing functions of that subunit. In Synechococcus elongatus (strain ATCC 33912 / PCC 7942 / FACHB-805) (Anacystis nidulans R2), this protein is Large ribosomal subunit protein bL20.